The sequence spans 378 residues: tRNA (guanine(26)-N(2))-dimethyltransferase (378 aa).

Residues 4–374 (KEVTEGKVRI…KGYEEIIRCV (371 aa)) form the Trm1 methyltransferase domain. S-adenosyl-L-methionine contacts are provided by Arg44, Arg69, Asp87, Asp114, and Ala115. The Zn(2+) site is built by Cys246, Cys249, Cys263, and Cys266.

Belongs to the class I-like SAM-binding methyltransferase superfamily. Trm1 family.

It carries out the reaction guanosine(26) in tRNA + 2 S-adenosyl-L-methionine = N(2)-dimethylguanosine(26) in tRNA + 2 S-adenosyl-L-homocysteine + 2 H(+). Functionally, dimethylates a single guanine residue at position 26 of a number of tRNAs using S-adenosyl-L-methionine as donor of the methyl groups. This Saccharolobus islandicus (strain M.16.27) (Sulfolobus islandicus) protein is tRNA (guanine(26)-N(2))-dimethyltransferase.